Here is a 317-residue protein sequence, read N- to C-terminus: Melanocyte-stimulating hormone receptor (317 aa).

Residues M1 to E37 are Extracellular-facing. N29 carries an N-linked (GlcNAc...) asparagine glycan. The chain crosses the membrane as a helical span at residues V38 to I63. Over A64–P72 the chain is Cytoplasmic. A helical transmembrane segment spans residues M73–L93. Residues E94–N118 lie on the Extracellular side of the membrane. Residues V119 to V140 form a helical membrane-spanning segment. The Cytoplasmic portion of the chain corresponds to D141 to R163. A helical membrane pass occupies residues I164–Y183. Residues N184–C191 are Extracellular-facing. The chain crosses the membrane as a helical span at residues L192–L211. Residues A212–A240 lie on the Cytoplasmic side of the membrane. The chain crosses the membrane as a helical span at residues A241–L266. Residues C267–N279 are Extracellular-facing. Residues F280–F300 traverse the membrane as a helical segment. Topologically, residues R301–W317 are cytoplasmic. C315 carries the S-palmitoyl cysteine lipid modification.

It belongs to the G-protein coupled receptor 1 family. Interacts with MGRN1, but does not undergo MGRN1-mediated ubiquitination; this interaction competes with GNAS-binding and thus inhibits agonist-induced cAMP production. Interacts with OPN3; the interaction results in a decrease in MC1R-mediated cAMP signaling and ultimately a decrease in melanin production in melanocytes.

It localises to the cell membrane. Functionally, receptor for MSH (alpha, beta and gamma) and ACTH. The activity of this receptor is mediated by G proteins which activate adenylate cyclase. Mediates melanogenesis, the production of eumelanin (black/brown) and phaeomelanin (red/yellow), via regulation of cAMP signaling in melanocytes. This Ovis aries (Sheep) protein is Melanocyte-stimulating hormone receptor (MC1R).